A 466-amino-acid polypeptide reads, in one-letter code: Argininosuccinate lyase (466 aa).

It belongs to the lyase 1 family. Argininosuccinate lyase subfamily.

It localises to the cytoplasm. It catalyses the reaction 2-(N(omega)-L-arginino)succinate = fumarate + L-arginine. The protein operates within amino-acid biosynthesis; L-arginine biosynthesis; L-arginine from L-ornithine and carbamoyl phosphate: step 3/3. This is Argininosuccinate lyase from Desulfovibrio desulfuricans (strain ATCC 27774 / DSM 6949 / MB).